The sequence spans 556 residues: Formate--tetrahydrofolate ligase (556 aa).

65-72 (TPAGEGKT) provides a ligand contact to ATP.

Belongs to the formate--tetrahydrofolate ligase family.

It catalyses the reaction (6S)-5,6,7,8-tetrahydrofolate + formate + ATP = (6R)-10-formyltetrahydrofolate + ADP + phosphate. The protein operates within one-carbon metabolism; tetrahydrofolate interconversion. In Hyphomonas neptunium (strain ATCC 15444), this protein is Formate--tetrahydrofolate ligase.